The chain runs to 180 residues: Ribosome-recycling factor (180 aa).

Belongs to the RRF family.

The protein resides in the cytoplasm. Responsible for the release of ribosomes from messenger RNA at the termination of protein biosynthesis. May increase the efficiency of translation by recycling ribosomes from one round of translation to another. This chain is Ribosome-recycling factor, found in Chlamydia abortus (strain DSM 27085 / S26/3) (Chlamydophila abortus).